The following is a 301-amino-acid chain: Acetylglutamate kinase (301 aa).

Substrate-binding positions include Gly68 to Gly69, Arg90, and Asn195.

It belongs to the acetylglutamate kinase family. ArgB subfamily.

Its subcellular location is the cytoplasm. It carries out the reaction N-acetyl-L-glutamate + ATP = N-acetyl-L-glutamyl 5-phosphate + ADP. It functions in the pathway amino-acid biosynthesis; L-arginine biosynthesis; N(2)-acetyl-L-ornithine from L-glutamate: step 2/4. Catalyzes the ATP-dependent phosphorylation of N-acetyl-L-glutamate. This Pseudomonas putida (strain GB-1) protein is Acetylglutamate kinase.